A 219-amino-acid polypeptide reads, in one-letter code: Alpha N-terminal protein methyltransferase 1 (219 aa).

Residues glycine 64, arginine 69, 111–112 (LQ), and glutamine 127 each bind S-adenosyl-L-methionine.

Belongs to the methyltransferase superfamily. NTM1 family.

The protein resides in the cytoplasm. It carries out the reaction N-terminal L-alanyl-L-prolyl-L-lysyl-[protein] + 3 S-adenosyl-L-methionine = N-terminal N,N,N-trimethyl-L-alanyl-L-prolyl-L-lysyl-[protein] + 3 S-adenosyl-L-homocysteine + 3 H(+). The catalysed reaction is N-terminal L-seryl-L-prolyl-L-lysyl-[protein] + 3 S-adenosyl-L-methionine = N-terminal N,N,N-trimethyl-L-seryl-L-prolyl-L-lysyl-[protein] + 3 S-adenosyl-L-homocysteine + 3 H(+). The enzyme catalyses N-terminal L-prolyl-L-prolyl-L-lysyl-[protein] + 2 S-adenosyl-L-methionine = N-terminal N,N-dimethyl-L-prolyl-L-prolyl-L-lysyl-[protein] + 2 S-adenosyl-L-homocysteine + 2 H(+). Functionally, alpha-N-methyltransferase that methylates the N-terminus of target proteins containing the N-terminal motif [Ala/Pro/Ser]-Pro-Lys when the initiator Met is cleaved. Specifically catalyzes mono-, di- or tri-methylation of exposed alpha-amino group of Ala or Ser residue in the [Ala/Ser]-Pro-Lys motif and mono- or di-methylation of Pro in the Pro-Pro-Lys motif. This is Alpha N-terminal protein methyltransferase 1 (tae1) from Schizosaccharomyces pombe (strain 972 / ATCC 24843) (Fission yeast).